The chain runs to 271 residues: MVVAKKSLGQHFLTDESFLDRIVDALPPLNPLKLVEIGVGLGDLTLKLLDRYPLKTYEIDSSLCEKMRSKLKVQKKPFKLELVEKDALFLKEEEPYFLISNLPYYIATRLVLNALKDPKCRGLLVMTQKEVALKFCAKDSQNALSVLAHAIGNATLLFDVPPSAFSPPPKVFSSVFEVIKESLKEKALASLAQVPFFEEALQKGFETLEDFLKACFSSPRKTLSNNLKKSVSYKEKLDKVLDFLALENQPTSVRASEIKDYLKLLNYLLKG.

Positions 11, 13, 38, 58, 86, and 101 each coordinate S-adenosyl-L-methionine.

The protein belongs to the class I-like SAM-binding methyltransferase superfamily. rRNA adenine N(6)-methyltransferase family. RsmA subfamily.

The protein resides in the cytoplasm. It catalyses the reaction adenosine(1518)/adenosine(1519) in 16S rRNA + 4 S-adenosyl-L-methionine = N(6)-dimethyladenosine(1518)/N(6)-dimethyladenosine(1519) in 16S rRNA + 4 S-adenosyl-L-homocysteine + 4 H(+). In terms of biological role, specifically dimethylates two adjacent adenosines (A1518 and A1519) in the loop of a conserved hairpin near the 3'-end of 16S rRNA in the 30S particle. May play a critical role in biogenesis of 30S subunits. The sequence is that of Ribosomal RNA small subunit methyltransferase A from Helicobacter pylori (strain HPAG1).